The primary structure comprises 272 residues: Putative phosphatase BU028/BU029 (272 aa).

Catalysis depends on Asp8, which acts as the Nucleophile. Asp8 contributes to the Mg(2+) binding site. Residue Leu9 participates in phosphate binding. Mg(2+) is bound at residue Asp10. Phosphate is bound by residues 42–43 (SG) and Lys191. Asp214 is a binding site for Mg(2+). Phosphate is bound at residue Asn217.

Belongs to the HAD-like hydrolase superfamily. Cof family. Mg(2+) is required as a cofactor.

The protein is Putative phosphatase BU028/BU029 of Buchnera aphidicola subsp. Acyrthosiphon pisum (strain APS) (Acyrthosiphon pisum symbiotic bacterium).